A 163-amino-acid chain; its full sequence is Phosphopantetheine adenylyltransferase (163 aa).

Thr-9 is a binding site for substrate. ATP-binding positions include 9 to 10 (TF) and His-17. The substrate site is built by Lys-41, Leu-73, and Arg-87. ATP contacts are provided by residues 88 to 90 (GLR), Glu-98, and 123 to 129 (YQFISGT).

The protein belongs to the bacterial CoaD family. In terms of assembly, homohexamer. The cofactor is Mg(2+).

Its subcellular location is the cytoplasm. It catalyses the reaction (R)-4'-phosphopantetheine + ATP + H(+) = 3'-dephospho-CoA + diphosphate. The protein operates within cofactor biosynthesis; coenzyme A biosynthesis; CoA from (R)-pantothenate: step 4/5. Reversibly transfers an adenylyl group from ATP to 4'-phosphopantetheine, yielding dephospho-CoA (dPCoA) and pyrophosphate. This Herminiimonas arsenicoxydans protein is Phosphopantetheine adenylyltransferase.